Here is a 551-residue protein sequence, read N- to C-terminus: DEAD-box ATP-dependent RNA helicase 47, mitochondrial (551 aa).

Residues methionine 1–threonine 29 constitute a mitochondrion transit peptide. The Q motif motif lies at lysine 110 to serine 138. Positions valine 141 to valine 340 constitute a Helicase ATP-binding domain. Serine 154 to threonine 161 lines the ATP pocket. Residues aspartate 274 to aspartate 277 carry the DEAD box motif. The 152-residue stretch at threonine 397–alanine 548 folds into the Helicase C-terminal domain.

It belongs to the DEAD box helicase family. Mostly expressed in leaves and flowers, and, to a lower extent, in roots, seedlings and siliques, especially in meristematic regions.

Its subcellular location is the mitochondrion. The enzyme catalyses ATP + H2O = ADP + phosphate + H(+). Functionally, essential protein required during embryogenesis. Required for mitochondrial metabolism. Necessary for normal plasmodesmata (PD) development and aperture regulation. This chain is DEAD-box ATP-dependent RNA helicase 47, mitochondrial (RH47), found in Arabidopsis thaliana (Mouse-ear cress).